The primary structure comprises 172 residues: Co-chaperone protein HscB homolog (172 aa).

In terms of domain architecture, J spans 2–74; sequence NHFELFGLVE…LRRAEYLLSL (73 aa).

It belongs to the HscB family. As to quaternary structure, interacts with HscA and stimulates its ATPase activity.

Functionally, co-chaperone involved in the maturation of iron-sulfur cluster-containing proteins. Seems to help targeting proteins to be folded toward HscA. The sequence is that of Co-chaperone protein HscB homolog from Aeromonas salmonicida (strain A449).